The following is a 450-amino-acid chain: Phosphoglucosamine mutase 2 (450 aa).

Residue serine 101 is the Phosphoserine intermediate of the active site. Serine 101, aspartate 245, aspartate 247, and aspartate 249 together coordinate Mg(2+). A Phosphoserine modification is found at serine 101.

Belongs to the phosphohexose mutase family. Mg(2+) is required as a cofactor. In terms of processing, activated by phosphorylation.

The enzyme catalyses alpha-D-glucosamine 1-phosphate = D-glucosamine 6-phosphate. Catalyzes the conversion of glucosamine-6-phosphate to glucosamine-1-phosphate. The polypeptide is Phosphoglucosamine mutase 2 (Shewanella baltica (strain OS185)).